Reading from the N-terminus, the 162-residue chain is NADH-quinone oxidoreductase subunit I (162 aa).

2 consecutive 4Fe-4S ferredoxin-type domains span residues L53–E83 and T93–I122. [4Fe-4S] cluster is bound by residues C63, C66, C69, C73, C102, C105, C108, and C112.

The protein belongs to the complex I 23 kDa subunit family. NDH-1 is composed of 14 different subunits. Subunits NuoA, H, J, K, L, M, N constitute the membrane sector of the complex. [4Fe-4S] cluster is required as a cofactor.

The protein localises to the cell inner membrane. The enzyme catalyses a quinone + NADH + 5 H(+)(in) = a quinol + NAD(+) + 4 H(+)(out). Functionally, NDH-1 shuttles electrons from NADH, via FMN and iron-sulfur (Fe-S) centers, to quinones in the respiratory chain. The immediate electron acceptor for the enzyme in this species is believed to be ubiquinone. Couples the redox reaction to proton translocation (for every two electrons transferred, four hydrogen ions are translocated across the cytoplasmic membrane), and thus conserves the redox energy in a proton gradient. This is NADH-quinone oxidoreductase subunit I from Thiobacillus denitrificans (strain ATCC 25259 / T1).